The following is a 66-amino-acid chain: uncharacterized protein (66 aa).

Residues 1–20 (MTIINSISNFGSNNSFSNNN) are compositionally biased toward low complexity. Residues 1–47 (MTIINSISNFGSNNSFSNNNTVNQKSVIKRSKQMKNDNTSIGSSFKN) form a disordered region. Polar residues predominate over residues 36–47 (NDNTSIGSSFKN).

This is an uncharacterized protein from Dictyostelium discoideum (Social amoeba).